The chain runs to 1687 residues: MDDAVCPTETDNVQNKQKATTPKRTQRRGGKQQLDRPERALFCLTLKNPLRIFCIKIVDSKLFEYFILLTIFANCVALAVYTPYPSGDSNITNQMLEKIEYIFLVIFTSECVMKIIAYGFVLHTGSYLRNGWNFLDFFIVVIGMISTALSNLVKEGFDVKALRAFRVLRPLRLVSGVPSLQVVLNSILKAMIPLLHIALLVLFVIIIYAIIGLELFSGKLHKTCRHSNTGEYLNDLDELHACGVGFKCPSGYECFDDWVGPNDGITNFDNFGLSMLTVFQCITLEGWTDVLYSIQDAMGSSWEWIYFVSMVILGAFFVMNLILGVLSGEFSKERTKAKNRGDFQKLREKQQIEEDLRGYLDWITQAEDIEPDPDAQIIEDCHKNKVKEVVSIDNLKDHENETQQTDSWFRSQKKYLERINRRIRRACRKAVKSQAFYWLIILLVFLNTGVLATEHYRQPIWLDQFQEYTNIFFIALFTCEMILKMYSLGFQGYFVSLFNRFDCFVVIGSISEMVLTSSELMAPLGVSVLRCVRLLRVFKVTKYWHSLSNLVASLLNSIQSIASLLLLLFLFIVIFGLLGMQVFGGRFTFKPEEEKPRSNFDSFYQSLLTVFQILTGEDWNVVMYDGIRAYGGVFSFGIVACIYYIILFICGNYILLNVFLAIAVDNLADADSLSTIEKEDESQIQLDNQIKNEMENEEYLQNGDHISFKAEFGADLDTYLQDEECGSYSDDENTYNKLGGVKQRVSSLPRRNTNTDMDRIKKDIPYGTSFFIFSHTNRFRIFCHRLCNHSNFGNFILCCIMFSSAMLAAENPLKADASRNIVLNKFDYFFTAVFTIELVLKLISYGFVLHDGAFCRSAFNLLDLLVVCVSLISIFFNSNAISVVKILRVLRVLRPLRAINRAKGLKHVVQCVIVAVKTIGNIVLVTCLLQFMFAVIGVQLFKGKFFSCSDGSKVYESDCHGTYLFYENGDINKPRLKEREWKNNKFHFDDVAKAMLTLFTVSTFEGWPTLLYVSIDSNKENGGPIYNFRPIVAAYYIIYIIIIAFFMVNIFVGFVIVTFQNEGEQEYKNCELDKNQRNCIEFALKAKPVRRYIPKHSIQYKVWWFVTSSSFEYSIFVLIMINTVTLAMKFYKQPEYYSEILDALNMIFTAVFSLEFIFKLAAFRFKNYFGDAWNTFDFIIVLGSFIDIVYSEIKTKEQALATCDGQSCNKAKGGSTLISINFFRLFRVMRLVKLLSKGEGIRTLLWTFIKSFQALPYVALLIVMLFFIYAVIGMQVFGKIMLEEGTSIDRNNNFQTFPQAVLVLFRSATGEAWQEIMMACSPRDDVKCDPESDAVNNCGSSIAFPYFISFYVLCSFLIINLFVAVIMDNFDYLTRDWSILGPHHLDEFIRLWSEYDPDAKGRIKHLDVVTLLRKISPPLGFGKLCPHRMACKRLVSMNMPLNSDGTVLFNATLFAVVRLPLAIKTDGNIDEANAELRATIKQIWKRTNPRLLDQVVLTGNDDEVTVGKFYATYLIQDYFRRFKKRKEQEGKCDQTENAVTLQAGLRTLQQNSPALKRTISGYLDELASEADPMHRRHHSLFGKVMSSLLRHEEITSSKIKHLSRTKTIPYQVEFLQHKVQLERNKDCLTSASDDISIEKIIRKQNKYNGQYFNSEANFMDNIKYTPRYDGEEYEMEDPKSKDKDEEF.

The segment at 1–33 is disordered; sequence MDDAVCPTETDNVQNKQKATTPKRTQRRGGKQQ. The Cytoplasmic portion of the chain corresponds to 1 to 61; the sequence is MDDAVCPTET…IFCIKIVDSK (61 aa). Positions 9 to 23 are enriched in polar residues; that stretch reads ETDNVQNKQKATTPK. An I repeat occupies 48–330; it reads NPLRIFCIKI…LILGVLSGEF (283 aa). The chain crosses the membrane as a helical span at residues 62 to 80; the sequence is LFEYFILLTIFANCVALAV. Residues 81–99 lie on the Extracellular side of the membrane; sequence YTPYPSGDSNITNQMLEKI. Asn90 carries N-linked (GlcNAc...) asparagine glycosylation. The helical transmembrane segment at 100–117 threads the bilayer; that stretch reads EYIFLVIFTSECVMKIIA. Topologically, residues 118–130 are cytoplasmic; sequence YGFVLHTGSYLRN. A helical transmembrane segment spans residues 131 to 145; it reads GWNFLDFFIVVIGMI. Over 146–157 the chain is Extracellular; it reads STALSNLVKEGF. A helical transmembrane segment spans residues 158 to 176; the sequence is DVKALRAFRVLRPLRLVSG. The Cytoplasmic portion of the chain corresponds to 177–196; the sequence is VPSLQVVLNSILKAMIPLLH. The chain crosses the membrane as a helical span at residues 197–216; that stretch reads IALLVLFVIIIYAIIGLELF. The Extracellular portion of the chain corresponds to 217 to 302; that stretch reads SGKLHKTCRH…SIQDAMGSSW (86 aa). Glu285 contacts Ca(2+). A helical transmembrane segment spans residues 303 to 327; sequence EWIYFVSMVILGAFFVMNLILGVLS. Over 328-434 the chain is Cytoplasmic; it reads GEFSKERTKA…RACRKAVKSQ (107 aa). One copy of the II repeat lies at 420–667; that stretch reads NRRIRRACRK…VFLAIAVDNL (248 aa). Residues 435 to 454 traverse the membrane as a helical segment; that stretch reads AFYWLIILLVFLNTGVLATE. At 455–467 the chain is on the extracellular side; the sequence is HYRQPIWLDQFQE. Residues 468 to 487 traverse the membrane as a helical segment; it reads YTNIFFIALFTCEMILKMYS. Over 488-496 the chain is Cytoplasmic; it reads LGFQGYFVS. A helical membrane pass occupies residues 497–515; sequence LFNRFDCFVVIGSISEMVL. Over 516–525 the chain is Extracellular; sequence TSSELMAPLG. A helical transmembrane segment spans residues 526–544; sequence VSVLRCVRLLRVFKVTKYW. Residues 545–563 lie on the Cytoplasmic side of the membrane; the sequence is HSLSNLVASLLNSIQSIAS. The chain crosses the membrane as a helical span at residues 564-583; the sequence is LLLLLFLFIVIFGLLGMQVF. Over 584 to 639 the chain is Extracellular; that stretch reads GGRFTFKPEEEKPRSNFDSFYQSLLTVFQILTGEDWNVVMYDGIRAYGGVFSFGIV. Glu617 lines the Ca(2+) pocket. A helical membrane pass occupies residues 640 to 664; the sequence is ACIYYIILFICGNYILLNVFLAIAV. At 665–785 the chain is on the cytoplasmic side; the sequence is DNLADADSLS…TNRFRIFCHR (121 aa). An III repeat occupies 777-1059; that stretch reads NRFRIFCHRL…IFVGFVIVTF (283 aa). The chain crosses the membrane as a helical span at residues 786-809; sequence LCNHSNFGNFILCCIMFSSAMLAA. Topologically, residues 810–826 are extracellular; the sequence is ENPLKADASRNIVLNKF. Residues 827-846 form a helical membrane-spanning segment; the sequence is DYFFTAVFTIELVLKLISYG. Residues 847-854 are Cytoplasmic-facing; it reads FVLHDGAF. Residues 855 to 877 traverse the membrane as a helical segment; the sequence is CRSAFNLLDLLVVCVSLISIFFN. At 878-885 the chain is on the extracellular side; sequence SNAISVVK. The chain crosses the membrane as a helical span at residues 886 to 900; sequence ILRVLRVLRPLRAIN. The Cytoplasmic segment spans residues 901-921; that stretch reads RAKGLKHVVQCVIVAVKTIGN. Residues 922–941 traverse the membrane as a helical segment; that stretch reads IVLVTCLLQFMFAVIGVQLF. At 942–1030 the chain is on the extracellular side; the sequence is KGKFFSCSDG…NGGPIYNFRP (89 aa). Residues 979–1068 form a dihydropyridine binding region; that stretch reads REWKNNKFHF…FQNEGEQEYK (90 aa). Glu1005 contacts Ca(2+). A helical membrane pass occupies residues 1031 to 1055; it reads IVAAYYIIYIIIIAFFMVNIFVGFV. Residues 1056–1110 lie on the Cytoplasmic side of the membrane; that stretch reads IVTFQNEGEQEYKNCELDKNQRNCIEFALKAKPVRRYIPKHSIQYKVWWFVTSSS. The IV repeat unit spans residues 1096–1370; the sequence is HSIQYKVWWF…LFVAVIMDNF (275 aa). The helical transmembrane segment at 1111 to 1129 threads the bilayer; the sequence is FEYSIFVLIMINTVTLAMK. Residues 1130–1143 are Extracellular-facing; it reads FYKQPEYYSEILDA. Residues 1144–1163 traverse the membrane as a helical segment; sequence LNMIFTAVFSLEFIFKLAAF. The Cytoplasmic segment spans residues 1164-1172; that stretch reads RFKNYFGDA. The helical transmembrane segment at 1173-1191 threads the bilayer; that stretch reads WNTFDFIIVLGSFIDIVYS. The Extracellular portion of the chain corresponds to 1192-1219; the sequence is EIKTKEQALATCDGQSCNKAKGGSTLIS. The chain crosses the membrane as a helical span at residues 1220 to 1238; the sequence is INFFRLFRVMRLVKLLSKG. At 1239–1257 the chain is on the cytoplasmic side; it reads EGIRTLLWTFIKSFQALPY. The helical transmembrane segment at 1258–1277 threads the bilayer; the sequence is VALLIVMLFFIYAVIGMQVF. The Extracellular portion of the chain corresponds to 1278–1343; that stretch reads GKIMLEEGTS…AVNNCGSSIA (66 aa). A dihydropyridine binding region spans residues 1327 to 1389; sequence KCDPESDAVN…LGPHHLDEFI (63 aa). The interval 1337–1378 is phenylalkylamine binding; sequence NCGSSIAFPYFISFYVLCSFLIINLFVAVIMDNFDYLTRDWS. A helical transmembrane segment spans residues 1344–1362; that stretch reads FPYFISFYVLCSFLIINLF. At 1363–1687 the chain is on the cytoplasmic side; it reads VAVIMDNFDY…PKSKDKDEEF (325 aa).

Belongs to the calcium channel alpha-1 subunit (TC 1.A.1.11) family. In terms of tissue distribution, predominantly expressed in the larval body wall musculature. In adults, highest expression in thorax followed by head and at a lower extent by abdomen.

It localises to the membrane. Functionally, voltage-sensitive calcium channels (VSCC) mediate the entry of calcium ions into excitable cells and are also involved in a variety of calcium-dependent processes, including muscle contraction, hormone or neurotransmitter release, gene expression, cell motility, cell division and cell death. MDL-alpha1 encodes a dihydropyridine- and diltiazem-sensitive current in larval body wall muscle. This chain is Muscle calcium channel subunit alpha-1, found in Musca domestica (House fly).